A 348-amino-acid polypeptide reads, in one-letter code: Short-chain dehydrogenase fogG (348 aa).

4 residues coordinate NADP(+): Leu-51, Arg-75, Asp-100, and Asn-126. Residues Ser-180 and Tyr-215 each act as proton donor in the active site. Positions 215 and 219 each coordinate NADP(+). The Lowers pKa of active site Tyr role is filled by Lys-219.

It belongs to the short-chain dehydrogenases/reductases (SDR) family.

The protein operates within secondary metabolite biosynthesis. Short-chain dehydrogenase; part of the gene cluster that mediates the biosynthesis of flavoglaucin and congeners (including aspergin, dihydroauroglaucin and auroglaucin), prenylated salicylaldehyde derivatives carrying a saturated or an unsaturated C-7 side chain. The PKS fogA releases the carboxylic acid (8E,10E,12E)-3,5,7-trihydroxytetradeca-8,10,12-trienoic acid as its product, as well as derivatives with one and two double bonds. FogA is indeed able to reduce the initial triketide, thus being at least partially responsible for the differently saturated heptyl side chains of flavoglaucin congeners. The oxidoreductases fogB, fogC and fogD modify the nascent polyketide in fogA-bound form and, together, fogA, fogB, fogC and fogD are necessary for the formation of the aromatic core and the cyclized PKS products are released as salicyl alcohols. In particular, fogB is responsible for oxidation of a hydroxyl group or reduction of remaining double bond(s) at the C-7 residue whereas fogD is probably involved in the reductive release of the modified PKS products. The cytochrome P450 monooxygenase fogE is then responsible for the hydroxylation at C-3 of the benzene ring. The fogE products are substrates of the prenyltransferase fogH and the prenylated benzyl alcohols are subsequently oxidized by the fogF to produce the final aryl aldehydes flavoglaucin and congeners. The short-chain dehydrogenase fogG does not seem to be involved in the biosynthesis of the prenylated salicylaldehyde derivatives. In Aspergillus ruber (strain CBS 135680), this protein is Short-chain dehydrogenase fogG.